A 284-amino-acid polypeptide reads, in one-letter code: Bifunctional protein FolD (284 aa).

NADP(+) is bound by residues glycine 166–serine 168 and isoleucine 232.

The protein belongs to the tetrahydrofolate dehydrogenase/cyclohydrolase family. Homodimer.

The enzyme catalyses (6R)-5,10-methylene-5,6,7,8-tetrahydrofolate + NADP(+) = (6R)-5,10-methenyltetrahydrofolate + NADPH. It catalyses the reaction (6R)-5,10-methenyltetrahydrofolate + H2O = (6R)-10-formyltetrahydrofolate + H(+). It participates in one-carbon metabolism; tetrahydrofolate interconversion. In terms of biological role, catalyzes the oxidation of 5,10-methylenetetrahydrofolate to 5,10-methenyltetrahydrofolate and then the hydrolysis of 5,10-methenyltetrahydrofolate to 10-formyltetrahydrofolate. This Glaesserella parasuis serovar 5 (strain SH0165) (Haemophilus parasuis) protein is Bifunctional protein FolD.